The primary structure comprises 215 residues: Cytochrome b6 (215 aa).

Residues 32–52 traverse the membrane as a helical segment; sequence IFYCLGGITLTCFLVQVATGF. Cysteine 35 is a heme c binding site. Heme b is bound by residues histidine 86 and histidine 100. The next 3 helical transmembrane spans lie at 90-110, 116-136, and 186-206; these read ASMM…TGGF, LTWV…VTGY, and LHTF…FLMI. Heme b contacts are provided by histidine 187 and histidine 202.

The protein belongs to the cytochrome b family. PetB subfamily. The 4 large subunits of the cytochrome b6-f complex are cytochrome b6, subunit IV (17 kDa polypeptide, PetD), cytochrome f and the Rieske protein, while the 4 small subunits are PetG, PetL, PetM and PetN. The complex functions as a dimer. The cofactor is heme b. It depends on heme c as a cofactor.

The protein localises to the plastid. Its subcellular location is the chloroplast thylakoid membrane. Functionally, component of the cytochrome b6-f complex, which mediates electron transfer between photosystem II (PSII) and photosystem I (PSI), cyclic electron flow around PSI, and state transitions. This chain is Cytochrome b6, found in Eucalyptus globulus subsp. globulus (Tasmanian blue gum).